The chain runs to 644 residues: L-aspartate oxidase 2-a, chloroplastic (644 aa).

Residues Ser-94–Ala-97, Lys-116, Asn-123–Gly-130, and Asp-294 each bind FAD. Catalysis depends on Arg-369, which acts as the Proton donor/acceptor. FAD contacts are provided by residues Glu-454 and Ser-470–Leu-471.

Belongs to the FAD-dependent oxidoreductase 2 family. NadB subfamily. Requires FAD as cofactor.

The protein resides in the plastid. Its subcellular location is the chloroplast. The catalysed reaction is L-aspartate + O2 = iminosuccinate + H2O2. It participates in alkaloid biosynthesis; nicotine biosynthesis. The protein operates within cofactor biosynthesis; NAD(+) biosynthesis; iminoaspartate from L-aspartate (oxidase route): step 1/1. Its function is as follows. Involved in the biosynthesis of pyridine alkaloid natural products, leading mainly to the production of anabasine, anatabine, nicotine and nornicotine, effective deterrents against herbivores with antiparasitic and pesticide properties (neurotoxins); nornicotine serves as the precursor in the synthesis of the carcinogen compound N'-nitrosonornicotine (NNN). Catalyzes the oxidation of L-aspartate to iminoaspartate. In Nicotiana tabacum (Common tobacco), this protein is L-aspartate oxidase 2-a, chloroplastic.